The sequence spans 410 residues: 3-phosphoshikimate 1-carboxyvinyltransferase (410 aa).

3-phosphoshikimate is bound by residues lysine 20, serine 21, and arginine 25. Lysine 20 serves as a coordination point for phosphoenolpyruvate. Arginine 115 serves as a coordination point for phosphoenolpyruvate. 3-phosphoshikimate is bound by residues serine 157, serine 158, glutamine 159, serine 183, aspartate 293, and lysine 320. Glutamine 159 contacts phosphoenolpyruvate. The active-site Proton acceptor is the aspartate 293. Residues arginine 324, arginine 365, and lysine 391 each coordinate phosphoenolpyruvate.

The protein belongs to the EPSP synthase family. Monomer.

It is found in the cytoplasm. It carries out the reaction 3-phosphoshikimate + phosphoenolpyruvate = 5-O-(1-carboxyvinyl)-3-phosphoshikimate + phosphate. Its pathway is metabolic intermediate biosynthesis; chorismate biosynthesis. Its function is as follows. Catalyzes the transfer of the enolpyruvyl moiety of phosphoenolpyruvate (PEP) to the 5-hydroxyl of shikimate-3-phosphate (S3P) to produce enolpyruvyl shikimate-3-phosphate and inorganic phosphate. The polypeptide is 3-phosphoshikimate 1-carboxyvinyltransferase (Thermoplasma acidophilum (strain ATCC 25905 / DSM 1728 / JCM 9062 / NBRC 15155 / AMRC-C165)).